The primary structure comprises 213 residues: Probable lipid phosphate phosphatase beta (213 aa).

Transmembrane regions (helical) follow at residues 30–50, 67–87, 118–138, 158–178, and 181–201; these read PFLP…RFSF, VPFL…KLIF, VFFV…SMTG, VEVV…RILL, and HYVL…LFAL.

Belongs to the PA-phosphatase related phosphoesterase family.

It localises to the membrane. The polypeptide is Probable lipid phosphate phosphatase beta (LPPB) (Arabidopsis thaliana (Mouse-ear cress)).